The following is a 582-amino-acid chain: Trans-activating transcriptional regulatory protein (582 aa).

The tract at residues Q101 to G131 is disordered.

This sequence belongs to the nucleopolyhedrovirus IE-1 protein family. As to quaternary structure, homodimer. Interacts with helicase and LEF-3. Phosphorylated.

Its subcellular location is the host nucleus. In terms of biological role, regulatory transcriptional protein, which trans-activates gene expression from early baculovirus promoters. Can also trans-activate its own promoter, suggesting an autoregulation during infection of host cells. Also promotes viral DNA genome replication via the N-terminal region. This Autographa californica nuclear polyhedrosis virus (AcMNPV) protein is Trans-activating transcriptional regulatory protein (IE1).